A 523-amino-acid chain; its full sequence is Exodeoxyribonuclease 7 large subunit (523 aa).

The disordered stretch occupies residues 502–523 (PGASPAARTRAGKAKADQGSLF).

It belongs to the XseA family. As to quaternary structure, heterooligomer composed of large and small subunits.

The protein resides in the cytoplasm. It catalyses the reaction Exonucleolytic cleavage in either 5'- to 3'- or 3'- to 5'-direction to yield nucleoside 5'-phosphates.. In terms of biological role, bidirectionally degrades single-stranded DNA into large acid-insoluble oligonucleotides, which are then degraded further into small acid-soluble oligonucleotides. This Rhodospirillum centenum (strain ATCC 51521 / SW) protein is Exodeoxyribonuclease 7 large subunit.